Consider the following 117-residue polypeptide: Putative phosphotransferase enzyme IIB component MG129 (117 aa).

Residues 1–21 (MKWLLWLGYIFSFGLLYLWIV) form a helical membrane-spanning segment. The PTS EIIB type-1 domain occupies 42–117 (PFKVKDFVSA…ELKKKIEDEQ (76 aa)).

The protein resides in the membrane. Its function is as follows. The phosphoenolpyruvate-dependent sugar phosphotransferase system (PTS), a major carbohydrate active -transport system, catalyzes the phosphorylation of incoming sugar substrates concomitant with their translocation across the cell membrane. This is Putative phosphotransferase enzyme IIB component MG129 from Mycoplasma genitalium (strain ATCC 33530 / DSM 19775 / NCTC 10195 / G37) (Mycoplasmoides genitalium).